The primary structure comprises 307 residues: Ornithine carbamoyltransferase (307 aa).

Residues S50–T53, Q77, R101, and H128–Q131 each bind carbamoyl phosphate. Residues N160, D224, and S228–M229 contribute to the L-ornithine site. Carbamoyl phosphate-binding positions include C264–L265 and R292.

Belongs to the aspartate/ornithine carbamoyltransferase superfamily. OTCase family.

The protein localises to the cytoplasm. It catalyses the reaction carbamoyl phosphate + L-ornithine = L-citrulline + phosphate + H(+). The protein operates within amino-acid biosynthesis; L-arginine biosynthesis; L-arginine from L-ornithine and carbamoyl phosphate: step 1/3. In terms of biological role, reversibly catalyzes the transfer of the carbamoyl group from carbamoyl phosphate (CP) to the N(epsilon) atom of ornithine (ORN) to produce L-citrulline. The sequence is that of Ornithine carbamoyltransferase from Clavibacter michiganensis subsp. michiganensis (strain NCPPB 382).